The sequence spans 505 residues: Apolipoprotein N-acyltransferase (505 aa).

6 consecutive transmembrane segments (helical) span residues 15–46 (AAFV…LLLL), 55–75 (ALIA…WVHV), 89–109 (LFLM…FGWL), 129–149 (LWLI…WLWL), 161–181 (FAPI…AGSL), and 192–212 (MACI…MQWV). The CN hydrolase domain maps to 225-471 (IQGNIEQGLK…TGVLKATVTP (247 aa)). Residue Glu-264 is the Proton acceptor of the active site. Lys-330 is an active-site residue. Catalysis depends on Cys-382, which acts as the Nucleophile. The chain crosses the membrane as a helical span at residues 479–499 (FLWGTTPLYLWVGLAAGFAFW).

It belongs to the CN hydrolase family. Apolipoprotein N-acyltransferase subfamily.

The protein localises to the cell inner membrane. The catalysed reaction is N-terminal S-1,2-diacyl-sn-glyceryl-L-cysteinyl-[lipoprotein] + a glycerophospholipid = N-acyl-S-1,2-diacyl-sn-glyceryl-L-cysteinyl-[lipoprotein] + a 2-acyl-sn-glycero-3-phospholipid + H(+). It participates in protein modification; lipoprotein biosynthesis (N-acyl transfer). Its function is as follows. Catalyzes the phospholipid dependent N-acylation of the N-terminal cysteine of apolipoprotein, the last step in lipoprotein maturation. This chain is Apolipoprotein N-acyltransferase, found in Vibrio cholerae serotype O1 (strain ATCC 39315 / El Tor Inaba N16961).